A 127-amino-acid polypeptide reads, in one-letter code: Cytochrome b-c1 complex subunit 7, mitochondrial (127 aa).

The protein belongs to the UQCRB/QCR7 family. Component of the ubiquinol-cytochrome c oxidoreductase (cytochrome b-c1 complex, complex III, CIII), a multisubunit enzyme composed of 10 subunits. The complex is composed of 3 respiratory subunits cytochrome b (COB), cytochrome c1 (CYT1) and Rieske protein (RIP1), 2 core protein subunits COR1 and QCR2, and 5 low-molecular weight protein subunits QCR6, QCR7, QCR8, QCR9 and QCR10. The complex exists as an obligatory dimer and forms supercomplexes (SCs) in the inner mitochondrial membrane with a monomer or a dimer of cytochrome c oxidase (complex IV, CIV), resulting in 2 different assemblies (supercomplexes III(2)IV and III(2)IV(2)).

The protein resides in the mitochondrion inner membrane. Its function is as follows. Component of the ubiquinol-cytochrome c oxidoreductase, a multisubunit transmembrane complex that is part of the mitochondrial electron transport chain which drives oxidative phosphorylation. Plays an important role in the uptake of multiple carbon sources such acetate, lactate, amino acids or GlcNAc present in different host niches. The chain is Cytochrome b-c1 complex subunit 7, mitochondrial from Candida albicans (strain SC5314 / ATCC MYA-2876) (Yeast).